The sequence spans 838 residues: Leucine--tRNA ligase (838 aa).

Positions 36–46 (PYPSGKIHMGH) match the 'HIGH' region motif. Positions 611-615 (KMSKS) match the 'KMSKS' region motif. Lys-614 is a binding site for ATP.

It belongs to the class-I aminoacyl-tRNA synthetase family.

It is found in the cytoplasm. It carries out the reaction tRNA(Leu) + L-leucine + ATP = L-leucyl-tRNA(Leu) + AMP + diphosphate. The polypeptide is Leucine--tRNA ligase (Wolbachia sp. subsp. Drosophila simulans (strain wRi)).